Here is a 268-residue protein sequence, read N- to C-terminus: Glucosamine-6-phosphate deaminase (268 aa).

Catalysis depends on D67, which acts as the Proton acceptor; for enolization step. The active-site For ring-opening step is N137. Catalysis depends on H139, which acts as the Proton acceptor; for ring-opening step. The active-site For ring-opening step is E144.

Belongs to the glucosamine/galactosamine-6-phosphate isomerase family. NagB subfamily. In terms of assembly, homohexamer.

It carries out the reaction alpha-D-glucosamine 6-phosphate + H2O = beta-D-fructose 6-phosphate + NH4(+). It functions in the pathway amino-sugar metabolism; N-acetylneuraminate degradation; D-fructose 6-phosphate from N-acetylneuraminate: step 5/5. Catalyzes the reversible isomerization-deamination of glucosamine 6-phosphate (GlcN6P) to form fructose 6-phosphate (Fru6P) and ammonium ion. This Colwellia psychrerythraea (strain 34H / ATCC BAA-681) (Vibrio psychroerythus) protein is Glucosamine-6-phosphate deaminase.